The chain runs to 446 residues: Acyl-lipid (8-3)-desaturase (446 aa).

Residues 6–82 (GKTFTWEELA…MKKYYVGTLV (77 aa)) form the Cytochrome b5 heme-binding domain. Heme contacts are provided by histidine 41 and histidine 64. 2 helical membrane-spanning segments follow: residues 125 to 145 (ALIF…PFVV) and 150 to 170 (LQVV…LNPL). Positions 171–175 (HDASH) match the Histidine box-1 motif. The short motif at 207 to 212 (HMLGHH) is the Histidine box-2 element. The Histidine box-3 motif lies at 387 to 391 (QAVHH).

It belongs to the fatty acid desaturase type 1 family. It depends on Fe(2+) as a cofactor.

The protein resides in the membrane. The catalysed reaction is an (8Z,11Z,14Z)-icosatrienoyl-containing glycerolipid + 2 Fe(II)-[cytochrome b5] + O2 + 2 H(+) = (5Z,8Z,11Z,14Z)-eicosatetraenoyl-containing glycerolipid + 2 Fe(III)-[cytochrome b5] + 2 H2O. It catalyses the reaction an (8Z,11Z,14Z,17Z)-eicosatetraenoyl-containing glycerolipid + 2 Fe(II)-[cytochrome b5] + O2 + 2 H(+) = a (5Z,8Z,11Z,14Z,17Z)-eicosapentaenoyl-containing glycerolipid + 2 Fe(III)-[cytochrome b5] + 2 H2O. Functionally, fatty acid desaturase that introduces a cis double bond at the 5-position in 20-carbon polyunsaturated fatty acids incorporated in a glycerolipid that contain a Delta(8) double bond. Involved in the conversion of di-homo-Delta-linolenic acid to arachidonic acid. Essential in the production of eicosanoids. The chain is Acyl-lipid (8-3)-desaturase (DES1) from Mortierella alpina (Oleaginous fungus).